We begin with the raw amino-acid sequence, 229 residues long: Peptidase E (229 aa).

Active-site charge relay system residues include S120, D135, and H157.

Belongs to the peptidase S51 family.

Its subcellular location is the cytoplasm. The enzyme catalyses Dipeptidase E catalyzes the hydrolysis of dipeptides Asp-|-Xaa. It does not act on peptides with N-terminal Glu, Asn or Gln, nor does it cleave isoaspartyl peptides.. Hydrolyzes dipeptides containing N-terminal aspartate residues. May play a role in allowing the cell to use peptide aspartate to spare carbon otherwise required for the synthesis of the aspartate family of amino acids. The sequence is that of Peptidase E from Salmonella paratyphi A (strain AKU_12601).